The sequence spans 33 residues: Brevinin-2PTe (33 aa).

The cysteines at positions 27 and 33 are disulfide-linked.

In terms of tissue distribution, expressed by the skin glands.

Its subcellular location is the secreted. Has antibacterial activity against the Gram-positive bacterium S.aureus ATCC 25923 (MIC=36 uM) and the Gram-negative bacterium E.coli ATCC 25726 (MIC=18 uM). This Pulchrana picturata (Malaysian fire frog) protein is Brevinin-2PTe.